The primary structure comprises 231 residues: Adenosylcobinamide-GDP ribazoletransferase (231 aa).

The next 6 membrane-spanning stretches (helical) occupy residues 29-49 (ICAY…SMKL), 53-73 (NFLW…LFHF), 101-121 (IGPF…YAFL), 126-146 (IDLI…LHFG), 167-187 (LISL…IISL), and 211-231 (DVLG…LSLI).

This sequence belongs to the CobS family. Mg(2+) serves as cofactor.

It localises to the cell inner membrane. The catalysed reaction is alpha-ribazole + adenosylcob(III)inamide-GDP = adenosylcob(III)alamin + GMP + H(+). It carries out the reaction alpha-ribazole 5'-phosphate + adenosylcob(III)inamide-GDP = adenosylcob(III)alamin 5'-phosphate + GMP + H(+). It functions in the pathway cofactor biosynthesis; adenosylcobalamin biosynthesis; adenosylcobalamin from cob(II)yrinate a,c-diamide: step 7/7. Its function is as follows. Joins adenosylcobinamide-GDP and alpha-ribazole to generate adenosylcobalamin (Ado-cobalamin). Also synthesizes adenosylcobalamin 5'-phosphate from adenosylcobinamide-GDP and alpha-ribazole 5'-phosphate. The protein is Adenosylcobinamide-GDP ribazoletransferase of Kosmotoga olearia (strain ATCC BAA-1733 / DSM 21960 / TBF 19.5.1).